Here is an 88-residue protein sequence, read N- to C-terminus: Apolipoprotein C-I (88 aa).

An N-terminal signal peptide occupies residues 1–26 (MRLFLSLPVLVVVLAMVLEGPAPTQA).

The protein belongs to the apolipoprotein C1 family.

Its subcellular location is the secreted. Inhibitor of lipoprotein binding to the low density lipoprotein (LDL) receptor, LDL receptor-related protein, and very low density lipoprotein (VLDL) receptor. Associates with high density lipoproteins (HDL) and the triacylglycerol-rich lipoproteins in the plasma and makes up about 10% of the protein of the VLDL and 2% of that of HDL. Appears to interfere directly with fatty acid uptake and is also the major plasma inhibitor of cholesteryl ester transfer protein (CETP). Binds free fatty acids and reduces their intracellular esterification. Modulates the interaction of APOE with beta-migrating VLDL and inhibits binding of beta-VLDL to the LDL receptor-related protein. The sequence is that of Apolipoprotein C-I (APOC1) from Phoca vitulina (Harbor seal).